Reading from the N-terminus, the 258-residue chain is Trans-aconitate 2-methyltransferase (258 aa).

The protein belongs to the methyltransferase superfamily. Tam family.

It is found in the cytoplasm. The catalysed reaction is trans-aconitate + S-adenosyl-L-methionine = (E)-3-(methoxycarbonyl)pent-2-enedioate + S-adenosyl-L-homocysteine. In terms of biological role, catalyzes the S-adenosylmethionine monomethyl esterification of trans-aconitate. This chain is Trans-aconitate 2-methyltransferase, found in Yersinia pseudotuberculosis serotype O:1b (strain IP 31758).